The following is a 21-amino-acid chain: Protein YliM (21 aa).

This chain is Protein YliM, found in Escherichia coli (strain K12).